A 284-amino-acid chain; its full sequence is Formamidopyrimidine-DNA glycosylase (284 aa).

Catalysis depends on proline 2, which acts as the Schiff-base intermediate with DNA. The active-site Proton donor is glutamate 3. Catalysis depends on lysine 60, which acts as the Proton donor; for beta-elimination activity. The DNA site is built by histidine 99, arginine 118, and arginine 163. Residues 248-282 form an FPG-type zinc finger; it reads WVYGRQGQPCRTCGQTIERIKLVGRSTHFCPQCQP. Arginine 272 serves as the catalytic Proton donor; for delta-elimination activity.

It belongs to the FPG family. Monomer. The cofactor is Zn(2+).

It carries out the reaction Hydrolysis of DNA containing ring-opened 7-methylguanine residues, releasing 2,6-diamino-4-hydroxy-5-(N-methyl)formamidopyrimidine.. It catalyses the reaction 2'-deoxyribonucleotide-(2'-deoxyribose 5'-phosphate)-2'-deoxyribonucleotide-DNA = a 3'-end 2'-deoxyribonucleotide-(2,3-dehydro-2,3-deoxyribose 5'-phosphate)-DNA + a 5'-end 5'-phospho-2'-deoxyribonucleoside-DNA + H(+). In terms of biological role, involved in base excision repair of DNA damaged by oxidation or by mutagenic agents. Acts as a DNA glycosylase that recognizes and removes damaged bases. Has a preference for oxidized purines, such as 7,8-dihydro-8-oxoguanine (8-oxoG). Has AP (apurinic/apyrimidinic) lyase activity and introduces nicks in the DNA strand. Cleaves the DNA backbone by beta-delta elimination to generate a single-strand break at the site of the removed base with both 3'- and 5'-phosphates. The protein is Formamidopyrimidine-DNA glycosylase of Acaryochloris marina (strain MBIC 11017).